We begin with the raw amino-acid sequence, 195 residues long: Imidazoleglycerol-phosphate dehydratase (195 aa).

The protein belongs to the imidazoleglycerol-phosphate dehydratase family.

The protein resides in the cytoplasm. It carries out the reaction D-erythro-1-(imidazol-4-yl)glycerol 3-phosphate = 3-(imidazol-4-yl)-2-oxopropyl phosphate + H2O. It participates in amino-acid biosynthesis; L-histidine biosynthesis; L-histidine from 5-phospho-alpha-D-ribose 1-diphosphate: step 6/9. The sequence is that of Imidazoleglycerol-phosphate dehydratase from Aromatoleum aromaticum (strain DSM 19018 / LMG 30748 / EbN1) (Azoarcus sp. (strain EbN1)).